A 284-amino-acid polypeptide reads, in one-letter code: UPF0276 protein Ping_0944 (284 aa).

This sequence belongs to the UPF0276 family.

The chain is UPF0276 protein Ping_0944 from Psychromonas ingrahamii (strain DSM 17664 / CCUG 51855 / 37).